The following is a 317-amino-acid chain: tRNA dimethylallyltransferase (317 aa).

Glycine 14 to threonine 21 contributes to the ATP binding site. Threonine 16 to threonine 21 contributes to the substrate binding site. The interaction with substrate tRNA stretch occupies residues aspartate 39–glutamine 42.

Belongs to the IPP transferase family. Monomer. Mg(2+) is required as a cofactor.

The catalysed reaction is adenosine(37) in tRNA + dimethylallyl diphosphate = N(6)-dimethylallyladenosine(37) in tRNA + diphosphate. Functionally, catalyzes the transfer of a dimethylallyl group onto the adenine at position 37 in tRNAs that read codons beginning with uridine, leading to the formation of N6-(dimethylallyl)adenosine (i(6)A). This Bacillus cereus (strain G9842) protein is tRNA dimethylallyltransferase.